The chain runs to 227 residues: Cytochrome c oxidase subunit 2 (227 aa).

The Mitochondrial intermembrane segment spans residues 1–14; sequence MAYSFQLGLQDATS. The chain crosses the membrane as a helical span at residues 15-45; the sequence is PIMEELMNFHDHTLMIVFLISSLVLYIISLM. Residues 46 to 59 lie on the Mitochondrial matrix side of the membrane; sequence LTTKLTHTSTMDAQ. A helical membrane pass occupies residues 60–87; it reads EVETIWTILPAVILIMIALPSLRILYMM. Topologically, residues 88–227 are mitochondrial intermembrane; the sequence is DEINNPVLTV…HFENWSASMI (140 aa). Positions 161, 196, 198, 200, 204, and 207 each coordinate Cu cation. E198 serves as a coordination point for Mg(2+).

This sequence belongs to the cytochrome c oxidase subunit 2 family. As to quaternary structure, component of the cytochrome c oxidase (complex IV, CIV), a multisubunit enzyme composed of 14 subunits. The complex is composed of a catalytic core of 3 subunits MT-CO1, MT-CO2 and MT-CO3, encoded in the mitochondrial DNA, and 11 supernumerary subunits COX4I, COX5A, COX5B, COX6A, COX6B, COX6C, COX7A, COX7B, COX7C, COX8 and NDUFA4, which are encoded in the nuclear genome. The complex exists as a monomer or a dimer and forms supercomplexes (SCs) in the inner mitochondrial membrane with NADH-ubiquinone oxidoreductase (complex I, CI) and ubiquinol-cytochrome c oxidoreductase (cytochrome b-c1 complex, complex III, CIII), resulting in different assemblies (supercomplex SCI(1)III(2)IV(1) and megacomplex MCI(2)III(2)IV(2)). Found in a complex with TMEM177, COA6, COX18, COX20, SCO1 and SCO2. Interacts with TMEM177 in a COX20-dependent manner. Interacts with COX20. Interacts with COX16. Cu cation serves as cofactor.

The protein resides in the mitochondrion inner membrane. It catalyses the reaction 4 Fe(II)-[cytochrome c] + O2 + 8 H(+)(in) = 4 Fe(III)-[cytochrome c] + 2 H2O + 4 H(+)(out). Functionally, component of the cytochrome c oxidase, the last enzyme in the mitochondrial electron transport chain which drives oxidative phosphorylation. The respiratory chain contains 3 multisubunit complexes succinate dehydrogenase (complex II, CII), ubiquinol-cytochrome c oxidoreductase (cytochrome b-c1 complex, complex III, CIII) and cytochrome c oxidase (complex IV, CIV), that cooperate to transfer electrons derived from NADH and succinate to molecular oxygen, creating an electrochemical gradient over the inner membrane that drives transmembrane transport and the ATP synthase. Cytochrome c oxidase is the component of the respiratory chain that catalyzes the reduction of oxygen to water. Electrons originating from reduced cytochrome c in the intermembrane space (IMS) are transferred via the dinuclear copper A center (CU(A)) of subunit 2 and heme A of subunit 1 to the active site in subunit 1, a binuclear center (BNC) formed by heme A3 and copper B (CU(B)). The BNC reduces molecular oxygen to 2 water molecules using 4 electrons from cytochrome c in the IMS and 4 protons from the mitochondrial matrix. In Praomys jacksoni (African forest rat), this protein is Cytochrome c oxidase subunit 2 (MT-CO2).